A 599-amino-acid polypeptide reads, in one-letter code: Aspartate--tRNA(Asp/Asn) ligase (599 aa).

Position 173 (Glu173) interacts with L-aspartate. Positions 197–200 (QLFK) are aspartate. L-aspartate is bound at residue Arg219. ATP contacts are provided by residues 219-221 (RDE) and Gln228. Residue His449 participates in L-aspartate binding. An ATP-binding site is contributed by Glu482. Arg489 provides a ligand contact to L-aspartate. 534–537 (GLDR) lines the ATP pocket.

The protein belongs to the class-II aminoacyl-tRNA synthetase family. Type 1 subfamily. Homodimer.

Its subcellular location is the cytoplasm. The enzyme catalyses tRNA(Asx) + L-aspartate + ATP = L-aspartyl-tRNA(Asx) + AMP + diphosphate. In terms of biological role, aspartyl-tRNA synthetase with relaxed tRNA specificity since it is able to aspartylate not only its cognate tRNA(Asp) but also tRNA(Asn). Reaction proceeds in two steps: L-aspartate is first activated by ATP to form Asp-AMP and then transferred to the acceptor end of tRNA(Asp/Asn). The polypeptide is Aspartate--tRNA(Asp/Asn) ligase (Marinobacter nauticus (strain ATCC 700491 / DSM 11845 / VT8) (Marinobacter aquaeolei)).